The chain runs to 198 residues: TATA-box-binding protein (198 aa).

2 repeat units span residues 14 to 90 and 105 to 181.

Belongs to the TBP family.

In terms of biological role, general factor that plays a role in the activation of archaeal genes transcribed by RNA polymerase. Binds specifically to the TATA box promoter element which lies close to the position of transcription initiation. The protein is TATA-box-binding protein of Saccharolobus shibatae (strain ATCC 51178 / DSM 5389 / JCM 8931 / NBRC 15437 / B12) (Sulfolobus shibatae).